Consider the following 92-residue polypeptide: Small ribosomal subunit protein uS19 (92 aa).

Belongs to the universal ribosomal protein uS19 family.

Its function is as follows. Protein S19 forms a complex with S13 that binds strongly to the 16S ribosomal RNA. The sequence is that of Small ribosomal subunit protein uS19 from Thermobifida fusca (strain YX).